A 561-amino-acid chain; its full sequence is Arginine--tRNA ligase (561 aa).

Residues 129–139 (ANPTGPLHVGH) carry the 'HIGH' region motif.

Belongs to the class-I aminoacyl-tRNA synthetase family. Monomer.

It is found in the cytoplasm. It carries out the reaction tRNA(Arg) + L-arginine + ATP = L-arginyl-tRNA(Arg) + AMP + diphosphate. In Bordetella avium (strain 197N), this protein is Arginine--tRNA ligase.